The sequence spans 58 residues: Small ribosomal subunit protein bS21 (58 aa).

It belongs to the bacterial ribosomal protein bS21 family.

This Prochlorococcus marinus (strain MIT 9301) protein is Small ribosomal subunit protein bS21.